Consider the following 172-residue polypeptide: Large ribosomal subunit protein uL10 (172 aa).

The protein belongs to the universal ribosomal protein uL10 family. In terms of assembly, part of the ribosomal stalk of the 50S ribosomal subunit. The N-terminus interacts with L11 and the large rRNA to form the base of the stalk. The C-terminus forms an elongated spine to which L12 dimers bind in a sequential fashion forming a multimeric L10(L12)X complex.

Forms part of the ribosomal stalk, playing a central role in the interaction of the ribosome with GTP-bound translation factors. This is Large ribosomal subunit protein uL10 from Rhodopseudomonas palustris (strain HaA2).